The chain runs to 233 residues: MDLQGLKITWLGHATFRVVTPKGTHILIDPWVMGNPACPETEKQVKKVDVMLITHGHFDHIGDAVEIAKKHSPKVVCIPEMGAWLQKKGVKNVAEMNKGGTQHVGDIAVTMVHAVHSCGITDGDQVVYGGEACGYVLKFDNDVTLYHAGDTMAFSDMKIIHELWRPQIAMLPIGDHYTMDPRQAAYAAELLQPKAIIPMHFGTFPVLTGKPSELEKFVEVCDVHEMKPGETWS.

It belongs to the UPF0173 family.

This Koribacter versatilis (strain Ellin345) protein is UPF0173 metal-dependent hydrolase Acid345_3437.